A 478-amino-acid chain; its full sequence is Lipoprotein lipase (478 aa).

The signal sequence occupies residues 1–27; it reads MESKALLLVALSVWLQSLIVSREGLAT. Residues 35–56 are interaction with GPIHBP1; it reads RDFTDIESKFALRTPEDTVEDT. Cysteine 57 and cysteine 70 are joined by a disulfide. N-linked (GlcNAc...) asparagine glycosylation occurs at asparagine 73. A 3'-nitrotyrosine modification is found at tyrosine 124. The active-site Nucleophile is the serine 162. Aspartate 186 (charge relay system) is an active-site residue. 3'-nitrotyrosine is present on tyrosine 194. Alanine 197, arginine 200, serine 202, and aspartate 205 together coordinate Ca(2+). Cysteine 246 and cysteine 269 are oxidised to a cystine. Residues 246–269 are essential for determining substrate specificity; sequence CNIGEAIRVIAERGLGDVDQLVKC. Residue histidine 271 is the Charge relay system of the active site. Disulfide bonds link cysteine 294-cysteine 313 and cysteine 305-cysteine 308. A PLAT domain is found at 344 to 467; it reads FHYQVKMRFS…KGKSSVVFVK (124 aa). The residue at position 346 (tyrosine 346) is a 3'-nitrotyrosine. The N-linked (GlcNAc...) asparagine glycan is linked to asparagine 389. The interval 420 to 424 is important for interaction with lipoprotein particles; sequence WSNWW. The segment at 433–437 is important for heparin binding; that stretch reads KIRVK. Positions 446-470 are interaction with GPIHBP1; the sequence is IFCSREKKSHLQKGKSSVVFVKCHD. Cysteines 448 and 468 form a disulfide.

The protein belongs to the AB hydrolase superfamily. Lipase family. In terms of assembly, homodimer. Interacts with GPIHBP1 with 1:1 stoichiometry. Interacts with APOC2; the interaction activates LPL activity in the presence of lipids. Interaction with heparan sulfate proteoglycans is required to protect LPL against loss of activity. Associates with lipoprotein particles in blood plasma. Interacts with LMF1 and SEL1L; interaction with SEL1L is required to prevent aggregation of newly synthesized LPL in the endoplasmic reticulum (ER), and for normal export of LPL from the ER to the extracellular space. Interacts with SORL1; SORL1 acts as a sorting receptor, promoting LPL localization to endosomes and later to lysosomes, leading to degradation of newly synthesized LPL. In terms of processing, tyrosine nitration after lipopolysaccharide (LPS) challenge down-regulates the lipase activity.

Its subcellular location is the cell membrane. The protein resides in the secreted. It localises to the extracellular space. The protein localises to the extracellular matrix. It carries out the reaction a triacylglycerol + H2O = a diacylglycerol + a fatty acid + H(+). The catalysed reaction is a 1,2-diacyl-sn-glycero-3-phosphocholine + H2O = a 2-acyl-sn-glycero-3-phosphocholine + a fatty acid + H(+). It catalyses the reaction 1,2,3-tri-(9Z-octadecenoyl)-glycerol + H2O = di-(9Z)-octadecenoylglycerol + (9Z)-octadecenoate + H(+). The enzyme catalyses 1,2-di-(9Z-octadecenoyl)-sn-glycero-3-phosphocholine + H2O = (9Z-octadecenoyl)-sn-glycero-3-phosphocholine + (9Z)-octadecenoate + H(+). It carries out the reaction 1,2,3-tributanoylglycerol + H2O = dibutanoylglycerol + butanoate + H(+). The catalysed reaction is 1,2-dihexadecanoyl-sn-glycero-3-phosphocholine + H2O = hexadecanoyl-sn-glycero-3-phosphocholine + hexadecanoate + H(+). Its activity is regulated as follows. The apolipoprotein APOC2 acts as a coactivator of LPL activity. Ca(2+) binding promotes protein stability and formation of the active homodimer. Interaction with GPIHBP1 protects LPL against inactivation by ANGPTL4. Its function is as follows. Key enzyme in triglyceride metabolism. Catalyzes the hydrolysis of triglycerides from circulating chylomicrons and very low density lipoproteins (VLDL), and thereby plays an important role in lipid clearance from the blood stream, lipid utilization and storage. Although it has both phospholipase and triglyceride lipase activities it is primarily a triglyceride lipase with low but detectable phospholipase activity. Mediates margination of triglyceride-rich lipoprotein particles in capillaries. Recruited to its site of action on the luminal surface of vascular endothelium by binding to GPIHBP1 and cell surface heparan sulfate proteoglycans. The sequence is that of Lipoprotein lipase (LPL) from Sus scrofa (Pig).